The chain runs to 443 residues: MQPTNFNTLINWQQCSEEQQKALLSRPAINASERITAAVSDILDRVKAEGDSALRDFSQRFDHVQVADIRITASEIAAASARLSDDVKHAMAQAVRNIEIFHNAQKMPVVDVETQPGVRCQQITRPIASVGLYIPGGSAPLPSTVLMLGTPARIAGCQRVVLCSPPPIADEILYAAQLCGIQEVFQIGGAQAIAAMAFGSESVPKVHKIFGPGNAYVTEAKRQVSQRLDGAAIDMPAGPSEVLVIADSGATPAFIAADLLSQAEHGPDSQVILLTPDAAIAQAVAVEVEQQLALLSRADIARQALESSRLIVTNDLQQCIDISNAYGPEHLILQIRQPEEIIDQIDNAGSVFMGDWSPESAGDYASGTNHVLPTYGYTSTYSSLGLADFVKRMTVQQLTPQGLLGLASTIETLAQAEQLTAHKNAVTLRVTALNNALTAVNKE.

NAD(+)-binding residues include Y133, Q191, and N214. Substrate contacts are provided by S240, Q262, and H265. Positions 262 and 265 each coordinate Zn(2+). Active-site proton acceptor residues include E329 and H330. Substrate is bound by residues H330, D363, E417, and H422. D363 lines the Zn(2+) pocket. H422 lines the Zn(2+) pocket.

The protein belongs to the histidinol dehydrogenase family. In terms of assembly, homodimer. Zn(2+) is required as a cofactor.

It catalyses the reaction L-histidinol + 2 NAD(+) + H2O = L-histidine + 2 NADH + 3 H(+). It participates in amino-acid biosynthesis; L-histidine biosynthesis; L-histidine from 5-phospho-alpha-D-ribose 1-diphosphate: step 9/9. Catalyzes the sequential NAD-dependent oxidations of L-histidinol to L-histidinaldehyde and then to L-histidine. The polypeptide is Histidinol dehydrogenase (Yersinia pestis).